The sequence spans 363 residues: Glutamate 5-kinase (363 aa).

Lys6 is a binding site for ATP. Substrate is bound by residues Ser46, Asp133, and Asn145. Residues 165–166 (TD) and 207–213 (TGGMHTK) contribute to the ATP site. The region spanning 271–349 (HGRLLLDGGA…REIEALLGYT (79 aa)) is the PUA domain.

Belongs to the glutamate 5-kinase family.

The protein resides in the cytoplasm. The catalysed reaction is L-glutamate + ATP = L-glutamyl 5-phosphate + ADP. It functions in the pathway amino-acid biosynthesis; L-proline biosynthesis; L-glutamate 5-semialdehyde from L-glutamate: step 1/2. Catalyzes the transfer of a phosphate group to glutamate to form L-glutamate 5-phosphate. The chain is Glutamate 5-kinase from Deinococcus radiodurans (strain ATCC 13939 / DSM 20539 / JCM 16871 / CCUG 27074 / LMG 4051 / NBRC 15346 / NCIMB 9279 / VKM B-1422 / R1).